The primary structure comprises 220 residues: Adenylate kinase (220 aa).

12–17 (GAGKGT) contributes to the ATP binding site. The NMP stretch occupies residues 32–62 (STGDIFRDIVKKENDELGKKIKEIMERGELV). Residues threonine 33, arginine 38, 60–62 (ELV), 88–91 (GYPR), and glutamine 95 contribute to the AMP site. An LID region spans residues 129–166 (ARRICPKCGRIYNLISLPPKEDELCDDCKVKLVQREDD). Arginine 130 contributes to the ATP binding site. Residues cysteine 133 and cysteine 136 each coordinate Zn(2+). 139–140 (IY) is a binding site for ATP. Zn(2+)-binding residues include cysteine 153 and cysteine 156. Residues arginine 163 and arginine 174 each coordinate AMP. ATP is bound at residue isoleucine 202.

This sequence belongs to the adenylate kinase family. As to quaternary structure, monomer.

Its subcellular location is the cytoplasm. It carries out the reaction AMP + ATP = 2 ADP. The protein operates within purine metabolism; AMP biosynthesis via salvage pathway; AMP from ADP: step 1/1. Catalyzes the reversible transfer of the terminal phosphate group between ATP and AMP. Plays an important role in cellular energy homeostasis and in adenine nucleotide metabolism. The sequence is that of Adenylate kinase from Thermotoga petrophila (strain ATCC BAA-488 / DSM 13995 / JCM 10881 / RKU-1).